The primary structure comprises 346 residues: Phosphate acyltransferase (346 aa).

This sequence belongs to the PlsX family. Homodimer. Probably interacts with PlsY.

It localises to the cytoplasm. The catalysed reaction is a fatty acyl-[ACP] + phosphate = an acyl phosphate + holo-[ACP]. The protein operates within lipid metabolism; phospholipid metabolism. Catalyzes the reversible formation of acyl-phosphate (acyl-PO(4)) from acyl-[acyl-carrier-protein] (acyl-ACP). This enzyme utilizes acyl-ACP as fatty acyl donor, but not acyl-CoA. The polypeptide is Phosphate acyltransferase (Brucella abortus (strain S19)).